The primary structure comprises 231 residues: tRNA (guanine-N(1)-)-methyltransferase (231 aa).

S-adenosyl-L-methionine contacts are provided by residues glycine 112 and 132 to 137 (LGDFVL).

It belongs to the RNA methyltransferase TrmD family. As to quaternary structure, homodimer.

It is found in the cytoplasm. The enzyme catalyses guanosine(37) in tRNA + S-adenosyl-L-methionine = N(1)-methylguanosine(37) in tRNA + S-adenosyl-L-homocysteine + H(+). Specifically methylates guanosine-37 in various tRNAs. The polypeptide is tRNA (guanine-N(1)-)-methyltransferase (Gloeothece citriformis (strain PCC 7424) (Cyanothece sp. (strain PCC 7424))).